A 361-amino-acid polypeptide reads, in one-letter code: Cyclic AMP receptor-like protein C (361 aa).

The Extracellular segment spans residues 1-18 (MGIEESQICNPSDREFLS). The chain crosses the membrane as a helical span at residues 19-39 (VDILNIVTSSLSLMGSALTII). Over 40 to 113 (SYIWKKVRRH…HGTYKQPTSK (74 aa)) the chain is Cytoplasmic. A helical membrane pass occupies residues 114-134 (LPLLIFMLSIADFFTSFFIII). Over 135 to 166 (SQSYLINNSKSYSTPYSPDLKIHFSPCIILRA) the chain is Extracellular. The chain crosses the membrane as a helical span at residues 167 to 187 (IIQFFFLSTFFWTTCISYYLF). Over 188–197 (HQLSSPGEEK) the chain is Cytoplasmic. A helical transmembrane segment spans residues 198–218 (YLLAIFNVVSWGIPFAISMVI). Residues 219–238 (TMTNSIVVNSDGWCEVAKPM) are Extracellular-facing. Residues 239–259 (ELSLWFLPLFLCLLVCSIYYF) traverse the membrane as a helical segment. Residues 260-292 (RLRRLFRSKFEYRLQINDRLKQLDSTISRRLTL) are Cytoplasmic-facing. Residues 293-313 (YIVVFVICWLPDVIQHFISFF) traverse the membrane as a helical segment. Residues 314 to 318 (SKCTF) are Extracellular-facing. The helical transmembrane segment at 319-339 (FPLLILQNILTPSQGFWNFWI) threads the bilayer. The Cytoplasmic portion of the chain corresponds to 340 to 361 (YSYTNKIARFTPSNDENKRLLQ).

The protein belongs to the G-protein coupled receptor 5 family.

The protein localises to the membrane. Functionally, receptor for cAMP. The polypeptide is Cyclic AMP receptor-like protein C (crlC) (Dictyostelium discoideum (Social amoeba)).